The following is a 127-amino-acid chain: Phosphoribosyl-AMP cyclohydrolase (127 aa).

Aspartate 96 is a binding site for Mg(2+). Cysteine 97 contacts Zn(2+). Aspartate 98 and aspartate 100 together coordinate Mg(2+). Zn(2+) contacts are provided by cysteine 113 and cysteine 120.

It belongs to the PRA-CH family. In terms of assembly, homodimer. It depends on Mg(2+) as a cofactor. Zn(2+) is required as a cofactor.

The protein resides in the cytoplasm. It catalyses the reaction 1-(5-phospho-beta-D-ribosyl)-5'-AMP + H2O = 1-(5-phospho-beta-D-ribosyl)-5-[(5-phospho-beta-D-ribosylamino)methylideneamino]imidazole-4-carboxamide. The protein operates within amino-acid biosynthesis; L-histidine biosynthesis; L-histidine from 5-phospho-alpha-D-ribose 1-diphosphate: step 3/9. Catalyzes the hydrolysis of the adenine ring of phosphoribosyl-AMP. The polypeptide is Phosphoribosyl-AMP cyclohydrolase (Corynebacterium jeikeium (strain K411)).